The chain runs to 626 residues: Lysine--tRNA ligase, cytoplasmic (626 aa).

The residue at position 1 (Met1) is an N-acetylmethionine. Composition is skewed to polar residues over residues 1-11 (MEGAADQTTKA) and 18-27 (DSSTTLNAAE). Positions 1 to 84 (MEGAADQTTK…QKAVAADDEE (84 aa)) are disordered. Positions 37–69 (RSKNALKKEQKMKQKEEEKRRKDEEKAEKAKQA) form a coiled coil. Residues 42-67 (LKKEQKMKQKEEEKRRKDEEKAEKAK) show a composition bias toward basic and acidic residues. Over residues 69-78 (APKASSQKAV) the composition is skewed to low complexity. The segment at residues 141–217 (SLAGRIMSKR…RGELSIFPRS (77 aa)) is a DNA-binding region (OB). Gly313 and Glu337 together coordinate substrate. ATP is bound by residues 359 to 361 (RNE) and 367 to 368 (HN). 2 residues coordinate substrate: Glu375 and Tyr377. Residues Glu521 and Glu528 each contribute to the Ca(2+) site. Position 528 to 529 (528 to 529 (EL)) interacts with ATP. Substrate contacts are provided by Asn531 and Glu535. 584-587 (GIDR) is an ATP binding site.

It belongs to the class-II aminoacyl-tRNA synthetase family. Ca(2+) serves as cofactor.

The protein localises to the cytoplasm. The protein resides in the cytosol. It catalyses the reaction tRNA(Lys) + L-lysine + ATP = L-lysyl-tRNA(Lys) + AMP + diphosphate. Functionally, catalyzes the specific attachment of an amino acid to its cognate tRNA in a 2 step reaction: the amino acid (AA) is first activated by ATP to form AA-AMP and then transferred to the acceptor end of the tRNA. Promotes aminoacylation of non-cognate tRNAs and translational recoding of lysine at nonsense codons. The protein is Lysine--tRNA ligase, cytoplasmic of Arabidopsis thaliana (Mouse-ear cress).